The chain runs to 79 residues: Small ribosomal subunit protein uS17 (79 aa).

This sequence belongs to the universal ribosomal protein uS17 family. Part of the 30S ribosomal subunit.

Functionally, one of the primary rRNA binding proteins, it binds specifically to the 5'-end of 16S ribosomal RNA. The protein is Small ribosomal subunit protein uS17 of Paramagnetospirillum magneticum (strain ATCC 700264 / AMB-1) (Magnetospirillum magneticum).